A 670-amino-acid polypeptide reads, in one-letter code: Amyloid beta A4 precursor protein-binding family B member 1-interacting protein (670 aa).

A Phosphoserine modification is found at S55. In terms of domain architecture, Ras-associating spans K179 to R266. The PH domain maps to V313–Y422. The disordered stretch occupies residues V449–D653. Residues Q456–M475 show a composition bias toward polar residues. The residue at position 532 (S532) is a Phosphoserine. Phosphothreonine is present on T534. S537 is modified (phosphoserine). 4 stretches are compositionally biased toward pro residues: residues P553 to P567, L576 to A599, L606 to C615, and P625 to P634.

The protein belongs to the MRL family. In terms of assembly, interacts, through the N-terminal Pro-rich region, with the WW domain of APBB1. Interacts with RAP1A, PFN1, VASP and ENAH. Ubiquitously expressed with high expression in the hematopoietic system.

It localises to the cell membrane. It is found in the cell projection. The protein resides in the lamellipodium. The protein localises to the cell junction. Its subcellular location is the focal adhesion. It localises to the cytoplasm. It is found in the cytoskeleton. Its function is as follows. Appears to function in the signal transduction from Ras activation to actin cytoskeletal remodeling. Suppresses insulin-induced promoter activities through AP1 and SRE. Mediates Rap1-induced adhesion. This is Amyloid beta A4 precursor protein-binding family B member 1-interacting protein (Apbb1ip) from Mus musculus (Mouse).